The primary structure comprises 118 residues: Ribulose bisphosphate carboxylase small subunit (118 aa).

It belongs to the RuBisCO small chain family. In terms of assembly, heterohexadecamer of 8 large and 8 small subunits.

RuBisCO catalyzes two reactions: the carboxylation of D-ribulose 1,5-bisphosphate, the primary event in carbon dioxide fixation, as well as the oxidative fragmentation of the pentose substrate. Both reactions occur simultaneously and in competition at the same active site. Although the small subunit is not catalytic it is essential for maximal activity. The sequence is that of Ribulose bisphosphate carboxylase small subunit from Rhodobacter capsulatus (Rhodopseudomonas capsulata).